Reading from the N-terminus, the 451-residue chain is tRNA-2-methylthio-N(6)-dimethylallyladenosine synthase (451 aa).

The MTTase N-terminal domain occupies 1–116 (MTYFFETYGC…LPQIFDEIKA (116 aa)). Residues cysteine 10, cysteine 46, cysteine 79, cysteine 162, cysteine 166, and cysteine 169 each contribute to the [4Fe-4S] cluster site. The Radical SAM core domain maps to 148–384 (SPKSFQSYVP…IDLQLKITAK (237 aa)). Positions 387–451 (KAKLGKKVDI…KGKTFRANLN (65 aa)) constitute a TRAM domain.

This sequence belongs to the methylthiotransferase family. MiaB subfamily. As to quaternary structure, monomer. [4Fe-4S] cluster serves as cofactor.

Its subcellular location is the cytoplasm. The enzyme catalyses N(6)-dimethylallyladenosine(37) in tRNA + (sulfur carrier)-SH + AH2 + 2 S-adenosyl-L-methionine = 2-methylsulfanyl-N(6)-dimethylallyladenosine(37) in tRNA + (sulfur carrier)-H + 5'-deoxyadenosine + L-methionine + A + S-adenosyl-L-homocysteine + 2 H(+). In terms of biological role, catalyzes the methylthiolation of N6-(dimethylallyl)adenosine (i(6)A), leading to the formation of 2-methylthio-N6-(dimethylallyl)adenosine (ms(2)i(6)A) at position 37 in tRNAs that read codons beginning with uridine. This Treponema denticola (strain ATCC 35405 / DSM 14222 / CIP 103919 / JCM 8153 / KCTC 15104) protein is tRNA-2-methylthio-N(6)-dimethylallyladenosine synthase.